The following is a 285-amino-acid chain: Probable glucose uptake protein GlcU (285 aa).

Transmembrane regions (helical) follow at residues 4 to 21 (FLAI…LFNV), 26 to 48 (GPYS…VYIF), 52 to 71 (VLTP…WALG), 84 to 106 (VSRT…GVIV), 110 to 132 (WSTI…GVIL), 153 to 175 (IIIL…LFNV), 180 to 197 (ALLP…LLTF), 210 to 227 (IIPG…FISQ), 232 to 254 (VATS…ILIL), and 266 to 283 (IVVG…LGIA).

This sequence belongs to the GRP transporter (TC 2.A.7.5) family.

The protein localises to the cell membrane. Involved in the uptake of glucose. This Bacillus anthracis protein is Probable glucose uptake protein GlcU (glcU).